Reading from the N-terminus, the 229-residue chain is Uracil-DNA glycosylase (229 aa).

The active-site Proton acceptor is the Asp64.

This sequence belongs to the uracil-DNA glycosylase (UDG) superfamily. UNG family.

The protein localises to the cytoplasm. It catalyses the reaction Hydrolyzes single-stranded DNA or mismatched double-stranded DNA and polynucleotides, releasing free uracil.. In terms of biological role, excises uracil residues from the DNA which can arise as a result of misincorporation of dUMP residues by DNA polymerase or due to deamination of cytosine. In Escherichia fergusonii (strain ATCC 35469 / DSM 13698 / CCUG 18766 / IAM 14443 / JCM 21226 / LMG 7866 / NBRC 102419 / NCTC 12128 / CDC 0568-73), this protein is Uracil-DNA glycosylase.